Here is a 942-residue protein sequence, read N- to C-terminus: Homeobox transcription factor phx1 (942 aa).

Composition is skewed to polar residues over residues 1–19, 61–73, 99–116, and 122–135; these read MRSY…NINY, HLQG…TNPN, ADNN…TNPS, and IVKS…SKQN. 5 disordered regions span residues 1–54, 61–80, 87–172, 604–651, and 892–922; these read MRSY…MQLP, HLQG…PEFD, KQEK…KKQR, WANQ…STST, and SSSG…DVYS. Residues 142-151 show a composition bias toward basic and acidic residues; the sequence is SVEKAKENVA. The segment covering 153 to 164 has biased composition (low complexity); the sequence is ESGTPESGGSTS. The segment at residues 164-224 is a DNA-binding region (homeobox); it reads SAPKSKKQRL…QNRRAKSKLI (61 aa). 2 stretches are compositionally biased toward polar residues: residues 604 to 614 and 630 to 641; these read WANQLPRQPDS and SHDTSSEYGNKS.

The protein localises to the nucleus. Its function is as follows. Trnascription factor that regulates the expression of the homocitrate synthase (HCS) lys4. The protein is Homeobox transcription factor phx1 (phx1) of Schizosaccharomyces pombe (strain 972 / ATCC 24843) (Fission yeast).